Here is a 438-residue protein sequence, read N- to C-terminus: Putative F-box protein At5g15660 (438 aa).

A disordered region spans residues 1–24 (MRRRSKKIKTENNSNPETSEERNK). An F-box domain is found at 22-68 (RNKFDEIPHDLVIEILERLPLKSVARFLTVSKLWATTIRSPDFRKSY).

This is Putative F-box protein At5g15660 from Arabidopsis thaliana (Mouse-ear cress).